The sequence spans 565 residues: MRLLARHAIRLLGQENSAGEVASLSRGAIRLKATTGYLNLATASVQPLEPEKQVLRKNSPLTDSFGRHHTYLRISLTERCNLRCDYCMPAEGVPLQPKNKLLTTEEILRLARIFVEQGVRKIRLTGGEPTVRRDIVEIVAQMKALPELEQIGITTNGLVLTRLLLPLQRAGLDNLNISLDTLKRDRFEKITRRKGWERVIAGIDLAVQLGYRPKVNCVLMRDFNEDEICDFVEFTRNRPVDVRFIEYMPFSGNKWHTERLISYKDTLQIIRQRWPDFKALPNGPNDTSKAYAVPGFKGQVGFITSMTEHFCGTCNRLRLTADGNIKVCLFGNKEFSLRDAMRDESVSEEQLVDLIGAAVQRKKKQHADAAPRLHHHLHPYSYHHAYHTSRLQLQARNYSQLTHVDGQGKAQMVDVGAKPSTTRLARAEATVQVGEKLTQLIADNQVAKGDVLTVAQIAGIMGAKRTAELIPLCHNISLSSVKVQATLLKTEQSVRLEATVRCSGQTGVEMEALTAVSVAALTVYDMCKAVSHDICITNVRLLSKSGGKRDFQREEPQNGIVTEVE.

The molybdenum cofactor biosynthesis protein A stretch occupies residues 3-367 (LLARHAIRLL…AVQRKKKQHA (365 aa)). Residues 64–276 (SFGRHHTYLR…LQIIRQRWPD (213 aa)) form the Radical SAM core domain. R73 contacts GTP. [4Fe-4S] cluster-binding residues include C80 and C84. Position 86 (Y86) interacts with S-adenosyl-L-methionine. C87 is a [4Fe-4S] cluster binding site. A GTP-binding site is contributed by R123. Position 127 (G127) interacts with S-adenosyl-L-methionine. T154 lines the GTP pocket. S178 provides a ligand contact to S-adenosyl-L-methionine. K214 provides a ligand contact to GTP. M248 contacts S-adenosyl-L-methionine. [4Fe-4S] cluster-binding residues include C311 and C314. 316–318 (RLR) contacts GTP. Residue C328 coordinates [4Fe-4S] cluster. D525 (for molybdenum cofactor biosynthesis protein C activity) is an active-site residue.

This sequence in the C-terminal section; belongs to the MoaC family. In the N-terminal section; belongs to the radical SAM superfamily. MoaA family. As to quaternary structure, isoform Mocs1a and isoform Mocs1b probably form a heterooligomer. The cofactor is [4Fe-4S] cluster.

The catalysed reaction is GTP + AH2 + S-adenosyl-L-methionine = (8S)-3',8-cyclo-7,8-dihydroguanosine 5'-triphosphate + 5'-deoxyadenosine + L-methionine + A + H(+). It catalyses the reaction (8S)-3',8-cyclo-7,8-dihydroguanosine 5'-triphosphate = cyclic pyranopterin phosphate + diphosphate. Its pathway is cofactor biosynthesis; molybdopterin biosynthesis. Its function is as follows. Isoform Mocs1a and isoform Mocs1b probably form a complex that catalyzes the conversion of 5'-GTP to cyclic pyranopterin monophosphate (cPMP). Mocs1a catalyzes the cyclization of GTP to (8S)-3',8-cyclo-7,8-dihydroguanosine 5'-triphosphate and Mocs1b catalyzes the subsequent conversion of (8S)-3',8-cyclo-7,8-dihydroguanosine 5'-triphosphate to cPMP. In Drosophila melanogaster (Fruit fly), this protein is Molybdenum cofactor biosynthesis protein 1 (Mocs1).